A 381-amino-acid polypeptide reads, in one-letter code: Spermidine/putrescine import ATP-binding protein PotA (381 aa).

The ABC transporter domain maps to 22 to 252; it reads VELRNVFKFF…PKTSFVADFI (231 aa). 54-61 lines the ATP pocket; the sequence is GPSGCGKT.

Belongs to the ABC transporter superfamily. Spermidine/putrescine importer (TC 3.A.1.11.1) family. In terms of assembly, the complex is composed of two ATP-binding proteins (PotA), two transmembrane proteins (PotB and PotC) and a solute-binding protein (PotD).

It localises to the cell inner membrane. The enzyme catalyses ATP + H2O + polyamine-[polyamine-binding protein]Side 1 = ADP + phosphate + polyamineSide 2 + [polyamine-binding protein]Side 1.. Functionally, part of the ABC transporter complex PotABCD involved in spermidine/putrescine import. Responsible for energy coupling to the transport system. The protein is Spermidine/putrescine import ATP-binding protein PotA of Nostoc sp. (strain PCC 7120 / SAG 25.82 / UTEX 2576).